Here is a 43-residue protein sequence, read N- to C-terminus: Peroxidase (43 aa).

Belongs to the peroxidase family. Classical plant (class III) peroxidase subfamily. Ca(2+) serves as cofactor. Heme b is required as a cofactor.

The enzyme catalyses 2 a phenolic donor + H2O2 = 2 a phenolic radical donor + 2 H2O. Removal of H(2)O(2), oxidation of toxic reductants, biosynthesis and degradation of lignin, suberization, auxin catabolism, response to environmental stresses such as wounding, pathogen attack and oxidative stress. These functions might be dependent on each isozyme/isoform in each plant tissue. This Cynara cardunculus var. scolymus (Globe artichoke) protein is Peroxidase.